The primary structure comprises 650 residues: Acetyl-coenzyme A synthetase (650 aa).

CoA is bound by residues 191–194, Thr-311, and Asn-335; that span reads RGGR. ATP-binding positions include 387–389, 411–416, Asp-501, and Arg-516; these read GEP and DTWWQT. Residue Ser-524 coordinates CoA. Residue Arg-527 coordinates ATP. Residues Val-538, His-540, and Ile-543 each coordinate Mg(2+). Arg-585 serves as a coordination point for CoA. At Lys-610 the chain carries N6-acetyllysine.

Belongs to the ATP-dependent AMP-binding enzyme family. Requires Mg(2+) as cofactor. Post-translationally, acetylated. Deacetylation by the SIR2-homolog deacetylase activates the enzyme.

It carries out the reaction acetate + ATP + CoA = acetyl-CoA + AMP + diphosphate. Functionally, catalyzes the conversion of acetate into acetyl-CoA (AcCoA), an essential intermediate at the junction of anabolic and catabolic pathways. AcsA undergoes a two-step reaction. In the first half reaction, AcsA combines acetate with ATP to form acetyl-adenylate (AcAMP) intermediate. In the second half reaction, it can then transfer the acetyl group from AcAMP to the sulfhydryl group of CoA, forming the product AcCoA. This chain is Acetyl-coenzyme A synthetase, found in Vibrio vulnificus (strain CMCP6).